Consider the following 195-residue polypeptide: Proteasome subunit beta 1 (195 aa).

The propeptide at 1–6 (MEELPA) is removed in mature form; by autocatalysis. Catalysis depends on Thr-7, which acts as the Nucleophile.

The protein belongs to the peptidase T1B family. In terms of assembly, the 20S proteasome core is composed of 14 alpha and 14 beta subunits that assemble into four stacked heptameric rings, resulting in a barrel-shaped structure. The two inner rings, each composed of seven catalytic beta subunits, are sandwiched by two outer rings, each composed of seven alpha subunits. The catalytic chamber with the active sites is on the inside of the barrel. Has a gated structure, the ends of the cylinder being occluded by the N-termini of the alpha-subunits. Is capped at one or both ends by the proteasome regulatory ATPase, PAN.

It is found in the cytoplasm. It carries out the reaction Cleavage of peptide bonds with very broad specificity.. With respect to regulation, the formation of the proteasomal ATPase PAN-20S proteasome complex, via the docking of the C-termini of PAN into the intersubunit pockets in the alpha-rings, triggers opening of the gate for substrate entry. Interconversion between the open-gate and close-gate conformations leads to a dynamic regulation of the 20S proteasome proteolysis activity. Its function is as follows. Component of the proteasome core, a large protease complex with broad specificity involved in protein degradation. In Sulfolobus acidocaldarius (strain ATCC 33909 / DSM 639 / JCM 8929 / NBRC 15157 / NCIMB 11770), this protein is Proteasome subunit beta 1.